Here is an 861-residue protein sequence, read N- to C-terminus: APC membrane recruitment protein 3 (861 aa).

Disordered regions lie at residues 1 to 77 (MELK…PKGG), 179 to 206 (AEGK…PPGE), 261 to 289 (PSLE…GPLQ), 351 to 415 (PLCP…FPRD), 514 to 558 (RGPT…GGAT), 576 to 644 (GLLA…SQKE), 716 to 742 (MLEQ…STQD), and 786 to 822 (AHGS…SQQE). A compositionally biased stretch (polar residues) spans 362–384 (SKASSIDTGTPKSEQPESVSTSD). Residues 518–530 (PRAPPTPGQPAAP) are compositionally biased toward pro residues. The segment covering 584–595 (ALGGATQGTGTL) has biased composition (low complexity). The segment covering 598–609 (DASREEETRGHS) has biased composition (basic and acidic residues). Polar residues-rich tracts occupy residues 615–629 (SMES…TSGK) and 719–730 (QKQSSSSPSMTT).

This sequence belongs to the Amer family.

It localises to the cell membrane. Its function is as follows. Regulator of the canonical Wnt signaling pathway. Acts by specifically binding phosphatidylinositol 4,5-bisphosphate (PtdIns(4,5)P2), translocating to the cell membrane. The chain is APC membrane recruitment protein 3 (AMER3) from Homo sapiens (Human).